The following is a 442-amino-acid chain: Divalent metal cation transporter MntH (442 aa).

11 helical membrane-spanning segments follow: residues 29 to 49, 62 to 82, 106 to 126, 135 to 155, 166 to 186, 209 to 229, 258 to 278, 295 to 315, 347 to 367, 372 to 392, and 413 to 433; these read MLAY…PGNW, TLLT…SLCV, FCLW…ELLG, FVIP…VLLF, ALVI…ILFS, MLYI…LYLH, FALS…AATF, LLSP…ALLA, LITR…FGEN, LIVL…IPLV, and LAWL…LQSL.

It belongs to the NRAMP family.

It localises to the cell inner membrane. In terms of biological role, h(+)-stimulated, divalent metal cation uptake system. This Nostoc sp. (strain PCC 7120 / SAG 25.82 / UTEX 2576) protein is Divalent metal cation transporter MntH.